The sequence spans 337 residues: uncharacterized protein (337 aa).

The Cytoplasmic portion of the chain corresponds to Met1 to Asn10. Residues Glu11 to Phe31 traverse the membrane as a helical segment. At Asp32–Asn100 the chain is on the extracellular side. A helical membrane pass occupies residues Ile101 to Val121. At Glu122–Asp197 the chain is on the cytoplasmic side. Positions Asn148 to Lys167 are enriched in low complexity. Positions Asn148–Glu179 are disordered. Residues Ile198–Val218 form a helical membrane-spanning segment. Over Ser219–Asn285 the chain is Extracellular. Residues Val286 to Leu306 form a helical membrane-spanning segment. Residues Met307–Lys337 are Cytoplasmic-facing.

The protein localises to the membrane. This is an uncharacterized protein from Dictyostelium discoideum (Social amoeba).